The sequence spans 179 residues: MQRKPSQKSATDKLFNHRVNEKITGVSRVRLVSDDGVAIVSFEEALRKAKEENLDLVEVSADQELHVCKIIDYGKYKFELLKKSKEAKKKQHVINVKEIKIRPRIESHDYEIKKKHAQEFLGKGDKVKVSLRFRGREMMHSDLGMKVVYRMIEDLKEHGTAERDPIQDGKQIVVIINPK.

Belongs to the IF-3 family. Monomer.

The protein resides in the cytoplasm. IF-3 binds to the 30S ribosomal subunit and shifts the equilibrium between 70S ribosomes and their 50S and 30S subunits in favor of the free subunits, thus enhancing the availability of 30S subunits on which protein synthesis initiation begins. This is Translation initiation factor IF-3 from Leptospira interrogans serogroup Icterohaemorrhagiae serovar copenhageni (strain Fiocruz L1-130).